Reading from the N-terminus, the 483-residue chain is 3-isopropylmalate dehydratase large subunit (483 aa).

[4Fe-4S] cluster is bound by residues Cys352, Cys412, and Cys415.

This sequence belongs to the aconitase/IPM isomerase family. LeuC type 1 subfamily. As to quaternary structure, heterodimer of LeuC and LeuD. [4Fe-4S] cluster is required as a cofactor.

It catalyses the reaction (2R,3S)-3-isopropylmalate = (2S)-2-isopropylmalate. It participates in amino-acid biosynthesis; L-leucine biosynthesis; L-leucine from 3-methyl-2-oxobutanoate: step 2/4. In terms of biological role, catalyzes the isomerization between 2-isopropylmalate and 3-isopropylmalate, via the formation of 2-isopropylmaleate. This chain is 3-isopropylmalate dehydratase large subunit, found in Paenarthrobacter aurescens (strain TC1).